Here is a 2009-residue protein sequence, read N- to C-terminus: ADP-ribosylation factor guanine nucleotide-exchange factor SEC7 (2009 aa).

The disordered stretch occupies residues 1 to 220; that stretch reads MSEQNSVVNA…ISLSSNGSNT (220 aa). A compositionally biased stretch (polar residues) spans 17 to 33; sequence ISSNVETASSVNPSVKP. Residues 37–53 show a composition bias toward basic and acidic residues; sequence IKEEAKETNGEDQKCKG. The segment covering 91 to 118 has biased composition (acidic residues); that stretch reads EGEDGDEDEDEDEDEDEDNGDEDDEDVD. Positions 134-143 are enriched in low complexity; sequence SVSGESTESS. Over residues 144 to 154 the composition is skewed to acidic residues; it reads SGEDEESDESD. A compositionally biased stretch (low complexity) spans 155-165; the sequence is GNTSNSSSGDE. Positions 166 to 184 are enriched in acidic residues; the sequence is SGSEEEEEEEEEEEEEENA. Residues 194 to 209 are compositionally biased toward polar residues; the sequence is SVPTNDSTAPRSTHTR. Over residues 210-220 the composition is skewed to low complexity; that stretch reads NISLSSNGSNT. Residues Ser212 and Ser215 each carry the phosphoserine modification. Position 334 is a phosphothreonine (Thr334). Ser447, Ser452, and Ser455 each carry phosphoserine. The short motif at 653 to 657 is the HUS box element; the sequence is NYDCN. The segment covering 771–788 has biased composition (low complexity); it reads SSARQESRSSLSNDVRSS. Residues 771–814 form a disordered region; that stretch reads SSARQESRSSLSNDVRSSIMTSNDDFKPTYEDEESRSLSSQNID. Residue Lys797 forms a Glycyl lysine isopeptide (Lys-Gly) (interchain with G-Cter in ubiquitin) linkage. Phosphoserine is present on Ser807. The region spanning 824–1010 is the SEC7 domain; it reads LKLRKTALSE…LFNEIANNEI (187 aa). Asp940 is a Mg(2+) binding site. The tract at residues 1017-1220 is HDS1 domain; it reads HQAMLSGDTN…QARVANPRVS (204 aa). Ser1226 is modified (phosphoserine). Position 1240 is a phosphothreonine (Thr1240). Over residues 1708 to 1723 the composition is skewed to polar residues; sequence GRKSSVSHHQTTNDTS. Residues 1708–1803 form a disordered region; that stretch reads GRKSSVSHHQ…KKTKHMKRNE (96 aa). Over residues 1724–1751 the composition is skewed to basic and acidic residues; it reads QHSDDDSNDRRENDSNISETVERAHQEE. A phosphoserine mark is found at Ser1741 and Ser1752. Over residues 1764–1777 the composition is skewed to polar residues; that stretch reads LNGQTKLNNGNSVP. Residues 1836-1883 form a C2 domain-interacting region (CIR) region; the sequence is FENEDFAHCIPYKEAIRITRLLEKSYEFSRDFNEDYGLRTRLVEARVV.

As to quaternary structure, interacts with ARF1. Interacts (via C-terminus) with RSP5 ubiquitin ligase.

The protein localises to the cytoplasm. It is found in the golgi apparatus. Its subcellular location is the trans-Golgi network. The protein resides in the cytoplasmic vesicle. It localises to the COPI-coated vesicle membrane. The protein localises to the COPII-coated vesicle membrane. In terms of biological role, guanine exchange factor that acts as an activator of ARF1 at the trans-Golgi network and is thus involved in vesicular budding and traffic between compartments of the Golgi apparatus. Activation of Arf (ADP-ribosylation factor) GTPases is essential for vesicle formation via recruitment of cargo adapters and coat proteins necessary for Golgi trafficking. Also plays an essential role in ER-to-Golgi traffic. SEC7 also acts as an effector of two Rab GTPases, YPT1 and YPT31/32. This is ADP-ribosylation factor guanine nucleotide-exchange factor SEC7 from Saccharomyces cerevisiae (strain ATCC 204508 / S288c) (Baker's yeast).